The primary structure comprises 376 residues: MFKESPIIRRVSRQIMVGNVPVGGDAPITVQSMTNTLTTDVAATVAQIKALEAVGADIVRVSVPTMDAAEAFREIKKQVNVPLVADIHFDYRIALKVAEYGVDCLRINPGNIGNENRIRSVVECARDNNIPIRIGVNGGSLEKDIQEKYTEPTPEALLESAMRHVDILDRLNFNEFKVSVKASDVFLAVESYKLLAKQIDNPLHLGITEAGGLRSGSVKSSVGLGLLLAQGIGDTIRISLAADPIEEIKVGFDILKSLKLRSRGINLIACPSCSRQEFDVVSTVNALEQRIEDIMTPMDVSIIGCIVNGPGEAMVSDLGLTGSSKKSGYYLDGIRQKERFDNTDLVDQLEQRIRAKARSMSERLDEKNKIDILTKD.

[4Fe-4S] cluster contacts are provided by Cys-270, Cys-273, Cys-305, and Glu-312.

It belongs to the IspG family. [4Fe-4S] cluster serves as cofactor.

It catalyses the reaction (2E)-4-hydroxy-3-methylbut-2-enyl diphosphate + oxidized [flavodoxin] + H2O + 2 H(+) = 2-C-methyl-D-erythritol 2,4-cyclic diphosphate + reduced [flavodoxin]. Its pathway is isoprenoid biosynthesis; isopentenyl diphosphate biosynthesis via DXP pathway; isopentenyl diphosphate from 1-deoxy-D-xylulose 5-phosphate: step 5/6. Its function is as follows. Converts 2C-methyl-D-erythritol 2,4-cyclodiphosphate (ME-2,4cPP) into 1-hydroxy-2-methyl-2-(E)-butenyl 4-diphosphate. The chain is 4-hydroxy-3-methylbut-2-en-1-yl diphosphate synthase (flavodoxin) from Colwellia psychrerythraea (strain 34H / ATCC BAA-681) (Vibrio psychroerythus).